The sequence spans 123 residues: Large ribosomal subunit protein bL12 (123 aa).

Belongs to the bacterial ribosomal protein bL12 family. Homodimer. Part of the ribosomal stalk of the 50S ribosomal subunit. Forms a multimeric L10(L12)X complex, where L10 forms an elongated spine to which 2 to 4 L12 dimers bind in a sequential fashion. Binds GTP-bound translation factors.

Functionally, forms part of the ribosomal stalk which helps the ribosome interact with GTP-bound translation factors. Is thus essential for accurate translation. In Maricaulis maris (strain MCS10) (Caulobacter maris), this protein is Large ribosomal subunit protein bL12.